The primary structure comprises 139 residues: D-ribose pyranase (139 aa).

Histidine 20 functions as the Proton donor in the catalytic mechanism. Residues aspartate 28, histidine 106, and 128-130 each bind substrate; that span reads YAN.

The protein belongs to the RbsD / FucU family. RbsD subfamily. As to quaternary structure, homodecamer.

It is found in the cytoplasm. The enzyme catalyses beta-D-ribopyranose = beta-D-ribofuranose. It functions in the pathway carbohydrate metabolism; D-ribose degradation; D-ribose 5-phosphate from beta-D-ribopyranose: step 1/2. Its function is as follows. Catalyzes the interconversion of beta-pyran and beta-furan forms of D-ribose. In Salmonella paratyphi B (strain ATCC BAA-1250 / SPB7), this protein is D-ribose pyranase.